A 342-amino-acid polypeptide reads, in one-letter code: MTDRYILAVESSCDETSVAILKNESTLLSNVIASQVESHKRFGGVVPEVASRHHVEVITTCFEDALQEAGISASDLSAVAVTYGPGLVGALLVGLAAAKAFAWANHLPLIPVNHMAGHLMAAREQKPLVYPLIALLVSGGHTELVYVPEPGDYHIIGETRDDAVGEAYDKVGRVMGLTYPAGREIDQLAHKGQDTYHFPRAMITEDHLEFSFSGLKSAFINLHHNAKQKGDELILEDLCASFQAAVLDILLAKTKKALSRYPAKMLVVAGGVAANQGLRDRLTQEITHIEVVIPKLRLCGDNAGMIALAAAIEYDKQHFANMSLNAKPSLAFDQFPDSFVIN.

Fe cation-binding residues include H114 and H118. Substrate is bound by residues 136–140, D169, G182, D186, and N275; that span reads LVSGG. D301 contacts Fe cation.

Belongs to the KAE1 / TsaD family. Requires Fe(2+) as cofactor.

It localises to the cytoplasm. The catalysed reaction is L-threonylcarbamoyladenylate + adenosine(37) in tRNA = N(6)-L-threonylcarbamoyladenosine(37) in tRNA + AMP + H(+). In terms of biological role, required for the formation of a threonylcarbamoyl group on adenosine at position 37 (t(6)A37) in tRNAs that read codons beginning with adenine. Is involved in the transfer of the threonylcarbamoyl moiety of threonylcarbamoyl-AMP (TC-AMP) to the N6 group of A37, together with TsaE and TsaB. TsaD likely plays a direct catalytic role in this reaction. This is tRNA N6-adenosine threonylcarbamoyltransferase from Streptococcus pyogenes serotype M2 (strain MGAS10270).